We begin with the raw amino-acid sequence, 332 residues long: Nucleoid-associated protein VP2128 (332 aa).

The protein belongs to the YejK family.

It is found in the cytoplasm. Its subcellular location is the nucleoid. This Vibrio parahaemolyticus serotype O3:K6 (strain RIMD 2210633) protein is Nucleoid-associated protein VP2128.